A 458-amino-acid chain; its full sequence is Peptidyl-prolyl cis-trans isomerase FKBP4 (458 aa).

Met1 is modified (N-acetylmethionine; in peptidyl-prolyl cis-trans isomerase FKBP4; alternate). At Thr2 the chain carries N-acetylthreonine; in peptidyl-prolyl cis-trans isomerase FKBP4, N-terminally processed; partial. The PPIase FKBP-type 1 domain occupies 50-138 (GDRVFVHYTG…VFEVELFEFK (89 aa)). Thr143 is subject to Phosphothreonine; by CK2. Residues 167–253 (GAMVEVALEG…RYEVHLKSFE (87 aa)) form the PPIase FKBP-type 2 domain. Tyr220 carries the phosphotyrosine modification. The segment at 267–400 (LEQSNIVKER…TQLAVCQQRT (134 aa)) is interaction with tubulin. 3 TPR repeats span residues 270–303 (SNIV…LEYE), 319–352 (LASH…DSNN), and 353–386 (EKGL…YPSN). Lys282 carries the N6-acetyllysine modification. The residue at position 373 (Arg373) is an Omega-N-methylarginine. The tract at residues 423 to 458 (HKAKTEVAAGDHPTDAEMKGEPNNVAGNQAQVKTEA) is disordered. Thr436 bears the Phosphothreonine mark. Lys441 participates in a covalent cross-link: Glycyl lysine isopeptide (Lys-Gly) (interchain with G-Cter in SUMO1). Residues 447–458 (VAGNQAQVKTEA) show a composition bias toward polar residues.

As to quaternary structure, homodimer. Interacts with GLMN. Associates with HSP90AA1 and HSP70 in steroid hormone receptor complexes. Also interacts with peroxisomal phytanoyl-CoA alpha-hydroxylase (PHYH). Interacts with NR3C1 and dynein. Interacts with HSF1 in the HSP90 complex. Associates with tubulin. Interacts with MAPT/TAU. Interacts (via TPR domain) with S100A1, S100A2 and S100A6; the interaction is Ca(2+) dependent. Interaction with S100A1 and S100A2 (but not with S100A6) leads to inhibition of FKBP4-HSP90 interaction. Interacts with dynein; causes partially NR3C1 transport to the nucleus. In terms of processing, phosphorylation by CK2 results in loss of HSP90 binding activity. Widely detected in the brain (at protein level).

The protein localises to the cytoplasm. Its subcellular location is the cytosol. The protein resides in the mitochondrion. It is found in the nucleus. It localises to the cytoskeleton. The protein localises to the cell projection. Its subcellular location is the axon. It catalyses the reaction [protein]-peptidylproline (omega=180) = [protein]-peptidylproline (omega=0). Inhibited by FK506. Functionally, immunophilin protein with PPIase and co-chaperone activities. Component of unligated steroid receptors heterocomplexes through interaction with heat-shock protein 90 (HSP90). Plays a role in the intracellular trafficking of heterooligomeric forms of steroid hormone receptors between cytoplasm and nuclear compartments. May have a protective role against oxidative stress in mitochondria. Also acts as a regulator of microtubule dynamics by inhibiting MAPT/TAU ability to promote microtubule assembly. The PPIase activity controls neuronal growth cones via regulation of TRPC1 channel opening. This Rattus norvegicus (Rat) protein is Peptidyl-prolyl cis-trans isomerase FKBP4 (Fkbp4).